The sequence spans 326 residues: Probable cell division protein WhiA (326 aa).

A DNA-binding region (H-T-H motif) is located at residues 275-308; sequence SLEELGQLADPPLTKDAIAGRIRRLLAMADKRAA.

It belongs to the WhiA family.

Its function is as follows. Involved in cell division and chromosome segregation. This chain is Probable cell division protein WhiA, found in Thermobifida fusca (strain YX).